We begin with the raw amino-acid sequence, 419 residues long: Transcription termination factor Rho (419 aa).

The Rho RNA-BD domain maps to 48–123 (DIFGDGVLEI…LKVNEVNYDK (76 aa)). RNA-binding regions lie at residues 61–66 (GFGFLR), 78–80 (DIY), and 108–110 (ERY). Residues 169 to 174 (GRGQRG), 181 to 186 (KAGKTM), and Arg-212 contribute to the ATP site. Residues 284 to 288 (VLTGG) are RNA-binding 2.

It belongs to the Rho family. As to quaternary structure, homohexamer. The homohexamer assembles into an open ring structure.

Facilitates transcription termination by a mechanism that involves Rho binding to the nascent RNA, activation of Rho's RNA-dependent ATPase activity, and release of the mRNA from the DNA template. This Salmonella typhi protein is Transcription termination factor Rho.